The following is a 490-amino-acid chain: Pentatricopeptide repeat-containing protein At2g20710, mitochondrial (490 aa).

Residues 1-86 constitute a mitochondrion transit peptide; that stretch reads MKHLLLLRLV…IKMLRKFSRF (86 aa). PPR repeat units lie at residues 138 to 172, 173 to 207, 208 to 243, 244 to 274, 280 to 310, 314 to 344, 349 to 379, and 384 to 421; these read NYHL…GFLK, GCLP…TVKP, DIFT…GLHL, DWRT…SEQM, RKHA…YKEL, YNTG…WEAG, DIRI…LVQK, and DTST…GWRP.

Belongs to the PPR family. P subfamily.

The protein localises to the mitochondrion. The chain is Pentatricopeptide repeat-containing protein At2g20710, mitochondrial from Arabidopsis thaliana (Mouse-ear cress).